The following is an 84-amino-acid chain: Small ribosomal subunit protein bS20 (84 aa).

Belongs to the bacterial ribosomal protein bS20 family.

Its function is as follows. Binds directly to 16S ribosomal RNA. This chain is Small ribosomal subunit protein bS20, found in Bacteroides thetaiotaomicron (strain ATCC 29148 / DSM 2079 / JCM 5827 / CCUG 10774 / NCTC 10582 / VPI-5482 / E50).